A 499-amino-acid polypeptide reads, in one-letter code: Cytochrome P450 705A12 (499 aa).

Residues 4–24 (LIIVDFQNISIFILLCLFSFL) traverse the membrane as a helical segment. C439 is a heme binding site.

Belongs to the cytochrome P450 family. Heme is required as a cofactor.

It is found in the membrane. Its function is as follows. May be involved in hydroxylation of the triterpene marneral. The protein is Cytochrome P450 705A12 of Arabidopsis thaliana (Mouse-ear cress).